The following is a 305-amino-acid chain: Ribonucleoside-diphosphate reductase small subunit (305 aa).

Residues Glu64, Glu94, and His97 each contribute to the Fe cation site. Tyr101 is an active-site residue. Residues Ile150 to Leu170 traverse the membrane as a helical segment. Positions 157, 191, and 194 each coordinate Fe cation.

This sequence belongs to the ribonucleoside diphosphate reductase small chain family. In terms of assembly, heterotetramer composed of a homodimer of the large subunit (R1) and a homodimer of the small subunit (R2). Larger multisubunit protein complex are also active, composed of (R1)n(R2)n. Requires Fe cation as cofactor.

It localises to the host membrane. The enzyme catalyses a 2'-deoxyribonucleoside 5'-diphosphate + [thioredoxin]-disulfide + H2O = a ribonucleoside 5'-diphosphate + [thioredoxin]-dithiol. In terms of biological role, ribonucleoside-diphosphate reductase holoenzyme provides the precursors necessary for viral DNA synthesis. Allows virus growth in non-dividing cells, as well as reactivation from latency in infected hosts. Catalyzes the biosynthesis of deoxyribonucleotides from the corresponding ribonucleotides. This is Ribonucleoside-diphosphate reductase small subunit from Homo sapiens (Human).